The following is a 553-amino-acid chain: Ubiquitin carboxyl-terminal hydrolase 17-like protein 15 (553 aa).

The 296-residue stretch at 80–375 (AGLQNMGNTC…QAYVLFYIQK (296 aa)) folds into the USP domain. The active-site Nucleophile is Cys-89. The active-site Proton acceptor is His-334. Composition is skewed to basic and acidic residues over residues 382–392 (SESVSRGREPR) and 398–413 (DTDRRATQGELKRDHP). 2 disordered regions span residues 382-413 (SESVSRGREPRALGAEDTDRRATQGELKRDHP) and 491-524 (STTPTHQESMNTGTLASLRGRARRSKGKNKHSKR). The segment covering 496 to 505 (HQESMNTGTL) has biased composition (polar residues). Residues 510–524 (GRARRSKGKNKHSKR) are compositionally biased toward basic residues.

It belongs to the peptidase C19 family. USP17 subfamily.

The protein localises to the nucleus. The protein resides in the endoplasmic reticulum. The enzyme catalyses Thiol-dependent hydrolysis of ester, thioester, amide, peptide and isopeptide bonds formed by the C-terminal Gly of ubiquitin (a 76-residue protein attached to proteins as an intracellular targeting signal).. Deubiquitinating enzyme that removes conjugated ubiquitin from specific proteins to regulate different cellular processes that may include cell proliferation, progression through the cell cycle, apoptosis, cell migration, and the cellular response to viral infection. This is Ubiquitin carboxyl-terminal hydrolase 17-like protein 15 (USP17L15) from Homo sapiens (Human).